Consider the following 245-residue polypeptide: Probable transcriptional regulatory protein Ddes_0536 (245 aa).

Residues 1 to 21 (MAGHSKWANIQHRKGRQDAKR) are disordered.

Belongs to the TACO1 family.

The protein localises to the cytoplasm. In Desulfovibrio desulfuricans (strain ATCC 27774 / DSM 6949 / MB), this protein is Probable transcriptional regulatory protein Ddes_0536.